The following is a 396-amino-acid chain: NADH-quinone oxidoreductase subunit D (396 aa).

The protein belongs to the complex I 49 kDa subunit family. NDH-1 is composed of 14 different subunits. Subunits NuoB, C, D, E, F, and G constitute the peripheral sector of the complex.

The protein resides in the cell inner membrane. The catalysed reaction is a quinone + NADH + 5 H(+)(in) = a quinol + NAD(+) + 4 H(+)(out). Functionally, NDH-1 shuttles electrons from NADH, via FMN and iron-sulfur (Fe-S) centers, to quinones in the respiratory chain. The immediate electron acceptor for the enzyme in this species is believed to be ubiquinone. Couples the redox reaction to proton translocation (for every two electrons transferred, four hydrogen ions are translocated across the cytoplasmic membrane), and thus conserves the redox energy in a proton gradient. In Brucella melitensis biotype 1 (strain ATCC 23456 / CCUG 17765 / NCTC 10094 / 16M), this protein is NADH-quinone oxidoreductase subunit D.